Consider the following 794-residue polypeptide: Phosphoribosylformylglycinamidine synthase subunit PurL (794 aa).

Residue H47 is part of the active site. 2 residues coordinate ATP: Y50 and K89. A Mg(2+)-binding site is contributed by E91. Substrate-binding positions include S92–H95 and R114. The Proton acceptor role is filled by H93. Residue D115 coordinates Mg(2+). Position 238 (Q238) interacts with substrate. D266 serves as a coordination point for Mg(2+). E310–Q312 is a binding site for substrate. ATP contacts are provided by D522 and G559. A Mg(2+)-binding site is contributed by N560. A substrate-binding site is contributed by S562.

Belongs to the FGAMS family. Monomer. Part of the FGAM synthase complex composed of 1 PurL, 1 PurQ and 2 PurS subunits.

It is found in the cytoplasm. The catalysed reaction is N(2)-formyl-N(1)-(5-phospho-beta-D-ribosyl)glycinamide + L-glutamine + ATP + H2O = 2-formamido-N(1)-(5-O-phospho-beta-D-ribosyl)acetamidine + L-glutamate + ADP + phosphate + H(+). Its pathway is purine metabolism; IMP biosynthesis via de novo pathway; 5-amino-1-(5-phospho-D-ribosyl)imidazole from N(2)-formyl-N(1)-(5-phospho-D-ribosyl)glycinamide: step 1/2. In terms of biological role, part of the phosphoribosylformylglycinamidine synthase complex involved in the purines biosynthetic pathway. Catalyzes the ATP-dependent conversion of formylglycinamide ribonucleotide (FGAR) and glutamine to yield formylglycinamidine ribonucleotide (FGAM) and glutamate. The FGAM synthase complex is composed of three subunits. PurQ produces an ammonia molecule by converting glutamine to glutamate. PurL transfers the ammonia molecule to FGAR to form FGAM in an ATP-dependent manner. PurS interacts with PurQ and PurL and is thought to assist in the transfer of the ammonia molecule from PurQ to PurL. This chain is Phosphoribosylformylglycinamidine synthase subunit PurL, found in Prochlorococcus marinus (strain MIT 9303).